A 221-amino-acid chain; its full sequence is Small ribosomal subunit protein uS3 (221 aa).

Residues 39–107 (LRKFLKDKLK…EVFLSIQEVR (69 aa)) enclose the KH type-2 domain.

It belongs to the universal ribosomal protein uS3 family. As to quaternary structure, part of the 30S ribosomal subunit. Forms a tight complex with proteins S10 and S14.

Binds the lower part of the 30S subunit head. Binds mRNA in the 70S ribosome, positioning it for translation. This chain is Small ribosomal subunit protein uS3, found in Bdellovibrio bacteriovorus (strain ATCC 15356 / DSM 50701 / NCIMB 9529 / HD100).